The chain runs to 712 residues: Anaerobic ribonucleoside-triphosphate reductase (712 aa).

Residues 3 to 92 (PHVMKRDGCK…EYRHDRDIER (90 aa)) enclose the ATP-cone domain. In terms of domain architecture, Glycine radical spans 583-708 (KKVNPYDKID…VKRRVKHLGN (126 aa)). Zn(2+)-binding residues include cysteine 644, cysteine 647, cysteine 662, and cysteine 665. Glycine 681 carries the post-translational modification Glycine radical.

The protein belongs to the anaerobic ribonucleoside-triphosphate reductase family. In terms of assembly, homodimer. Forms a tetramer composed of two NrdD and two NrdG subunits.

It carries out the reaction a ribonucleoside 5'-triphosphate + formate + H(+) = a 2'-deoxyribonucleoside 5'-triphosphate + CO2 + H2O. It catalyses the reaction formate + ATP + H(+) = dATP + CO2 + H2O. The catalysed reaction is CTP + formate + H(+) = dCTP + CO2 + H2O. The enzyme catalyses GTP + formate + H(+) = dGTP + CO2 + H2O. It carries out the reaction UTP + formate + H(+) = dUTP + CO2 + H2O. With respect to regulation, activated under anaerobic conditions by NrdG, a tightly associated activase. Activation involves the formation of a glycyl radical at Gly-681. Exposure of the activated reductase to oxygen leads to C-terminal truncation and inactivation of the protein, by cleavage at the N-terminal side of Gly-681. The presence of zinc protects the protein from proteolysis and prevents the formation of disulfide bridges within it. The enzyme shows a basal activity in the absence of any effector, but reduction is stimulated up to 10-fold by an appropriate modulator (dGTP for ATP reduction, ATP for CTP and UTP reduction, and dTTP for GTP reduction). dGTP and dTTP inhibit the reduction of the incorrect substrate, and dATP inhibits reduction of all four. These modulators act as allosteric effectors. Functionally, catalyzes the conversion of ribonucleotides into deoxyribonucleotides, which are required for DNA synthesis and repair. Can reduce each of the four common ribonucleoside triphosphates. This chain is Anaerobic ribonucleoside-triphosphate reductase, found in Escherichia coli (strain K12).